A 364-amino-acid polypeptide reads, in one-letter code: tRNA-specific 2-thiouridylase MnmA 2 (364 aa).

ATP is bound by residues 10–17 (GMSGGVDS) and Met-36. The Nucleophile role is filled by Cys-106. The cysteines at positions 106 and 204 are disulfide-linked. Gly-130 lines the ATP pocket. The interaction with tRNA stretch occupies residues 154–156 (KDQ). Cys-204 serves as the catalytic Cysteine persulfide intermediate. An interaction with tRNA region spans residues 310-311 (RY).

Belongs to the MnmA/TRMU family.

The protein resides in the cytoplasm. It catalyses the reaction S-sulfanyl-L-cysteinyl-[protein] + uridine(34) in tRNA + AH2 + ATP = 2-thiouridine(34) in tRNA + L-cysteinyl-[protein] + A + AMP + diphosphate + H(+). Catalyzes the 2-thiolation of uridine at the wobble position (U34) of tRNA, leading to the formation of s(2)U34. In Caldanaerobacter subterraneus subsp. tengcongensis (strain DSM 15242 / JCM 11007 / NBRC 100824 / MB4) (Thermoanaerobacter tengcongensis), this protein is tRNA-specific 2-thiouridylase MnmA 2.